A 582-amino-acid polypeptide reads, in one-letter code: BTB/POZ domain and ankyrin repeat-containing protein NPR1 (582 aa).

Residues 1-18 are compositionally biased toward polar residues; sequence MEPPTSHVTNAFSDSDSA. A disordered region spans residues 1–25; the sequence is MEPPTSHVTNAFSDSDSASVEEGGA. A BTB domain is found at 55 to 140; the sequence is ADARIAVPGG…VLDYLYSGRV (86 aa). The segment at 147–161 adopts a C2HC NPR-type zinc-finger fold; the sequence is ACLCVDEDCAHVGCH. 4 residues coordinate Zn(2+): C150, C155, H157, and C160. ANK repeat units follow at residues 229-258, 269-299, 301-328, and 332-361; these read RSNLDMITLEKSLPPDVIKQIIDARLSLGL, KHVRRIHRALDSDDVELVRMLLTEGQTNLDD, FALHYAVEHCDSKITTELLDLALADVNH, and RGYTVLHIAARRREPKIIVSLLTKGARPAD. The interval 391 to 526 is salicylic acid-binding core (SBC); sequence PSPKDRLCIE…VLDKIMDDET (136 aa). R436 is a binding site for salicylate. Positions 551 to 582 are disordered; the sequence is QKAFHEDKEENDRSGLSSSSSSTSIGAIRPRR. Residues 553-563 show a composition bias toward basic and acidic residues; the sequence is AFHEDKEENDR. Positions 564–574 are enriched in low complexity; sequence SGLSSSSSSTS.

Belongs to the plant 'ANKYRIN-BTB/POZ' family. 'NPR1-like' subfamily. Oligomer in an uninduced state; disulfide-linked. Forms activated monomer upon changes in cellular redox potential. Interacts with TGA2.1, TGA2.2, TGA2.3, LG2, TGAL1 and TGAL4. Interacts with NRR, RH1, RH2 and RH3.

It localises to the cytoplasm. The protein localises to the nucleus. Its subcellular location is the nuclear body. It functions in the pathway protein modification; protein ubiquitination. In terms of biological role, salicylic acid (SA)-binding substrate-specific adapter of an E3 ubiquitin-protein ligase complex (CUL3-RBX1-BTB) which mediates the ubiquitination and subsequent proteasomal degradation of target proteins. Transcription cofactor that represses gene expression in the absence of salicylic acid (SA), when attached to negative cis-elements (W-box) with WRKY transcription factors, but stimulates gene expression upon activation by SA, when sumoylated and attached to positive cis-elements (as-1) with TGA transcription factors, thus confering immunity through a series of gene regulations ending in a significant increase in antimicrobial and defense genes expression. Key positive factor of disease resistance. Plays an essential role in benzothiadiazole (BTH)-induced resistance to the blast fungus disease caused by Magnaporthe oryzae. Involved in defense response against the bacterial blight disease caused by Xanthomonas oryzae pv. oryzae (Xoo). Over-expression of NPR1/NH1 confers disease resistance to Xoo, but also enhances herbivore susceptibility. Functions as a transcriptional coactivator of TGA2.1 and LG2 in vitro. Involved in defense response against herbivore. Plants silencing NPR1/NH1 have increased herbivore-induced trypsin proteinase inhibitors and volatiles, which reduces the performance of the striped stem borer (SSB) Chilo suppressalis. The chain is BTB/POZ domain and ankyrin repeat-containing protein NPR1 from Oryza sativa subsp. japonica (Rice).